The following is a 585-amino-acid chain: tRNA 5-methylaminomethyl-2-thiouridine biosynthesis bifunctional protein MnmC (585 aa).

The tract at residues 1–236 (MTPDGLYCDP…KRERLEAVWP (236 aa)) is tRNA (mnm(5)s(2)U34)-methyltransferase. An FAD-dependent cmnm(5)s(2)U34 oxidoreductase region spans residues 254–585 (LGAGIAGASL…SRRAGQGAAG (332 aa)). The segment at 564 to 585 (EAMAPGRFAERRSRRAGQGAAG) is disordered.

In the N-terminal section; belongs to the methyltransferase superfamily. tRNA (mnm(5)s(2)U34)-methyltransferase family. The protein in the C-terminal section; belongs to the DAO family. FAD serves as cofactor.

The protein resides in the cytoplasm. The enzyme catalyses 5-aminomethyl-2-thiouridine(34) in tRNA + S-adenosyl-L-methionine = 5-methylaminomethyl-2-thiouridine(34) in tRNA + S-adenosyl-L-homocysteine + H(+). In terms of biological role, catalyzes the last two steps in the biosynthesis of 5-methylaminomethyl-2-thiouridine (mnm(5)s(2)U) at the wobble position (U34) in tRNA. Catalyzes the FAD-dependent demodification of cmnm(5)s(2)U34 to nm(5)s(2)U34, followed by the transfer of a methyl group from S-adenosyl-L-methionine to nm(5)s(2)U34, to form mnm(5)s(2)U34. The protein is tRNA 5-methylaminomethyl-2-thiouridine biosynthesis bifunctional protein MnmC of Maricaulis maris (strain MCS10) (Caulobacter maris).